We begin with the raw amino-acid sequence, 463 residues long: uncharacterized protein (463 aa).

The signal sequence occupies residues Met-1–Ala-23. Disordered regions lie at residues Ser-174–Ser-200 and Gly-239–Asn-258.

Belongs to the but2 family.

Its subcellular location is the cytoplasm. This is an uncharacterized protein from Schizosaccharomyces pombe (strain 972 / ATCC 24843) (Fission yeast).